We begin with the raw amino-acid sequence, 732 residues long: Probable zinc transporter cis4 (732 aa).

12 helical membrane passes run 52-72, 79-99, 111-131, 163-183, 189-209, 219-239, 240-260, 268-288, 350-370, 380-400, 415-435, and 453-473; these read ETLG…GLEV, FYLI…LGIY, VIIA…LGTL, YIAF…LGYF, VFYA…FYLV, LAFL…VLPL, GTIN…IFCI, IQFY…SAII, IFYF…YGLW, AIHM…TTLA, IEAL…FSIV, and LLLV…AFNH. The tract at residues 526-547 is disordered; that stretch reads HVSQHEHTHENSQEHHHEHNHN. 2 helical membrane passes run 586 to 606 and 615 to 635; these read IFLH…STIL and FDPL…LPLI.

Belongs to the cation diffusion facilitator (CDF) transporter (TC 2.A.4) family. SLC30A subfamily. In terms of assembly, interacts with zrg17.

It localises to the endoplasmic reticulum membrane. It is found in the golgi apparatus. The protein resides in the cis-Golgi network membrane. Probable zinc transporter involved in Golgi membrane trafficking through the regulation of zinc homeostasis. This chain is Probable zinc transporter cis4 (cis4), found in Schizosaccharomyces pombe (strain 972 / ATCC 24843) (Fission yeast).